Reading from the N-terminus, the 656-residue chain is Phosphatidylinositol 4,5-bisphosphate-binding protein SLM2 (656 aa).

Residues 445–555 (FEVKSGFLEK…WFGNIKALSS (111 aa)) enclose the PH domain. The segment at 577–605 (AKSNENTTESVTPQVTNEQHTRYDDVSSS) is disordered. Polar residues predominate over residues 580–594 (NENTTESVTPQVTNE). Ser-626 bears the Phosphoserine mark. The short motif at 640-645 (PEFYIE) is the PXIXIT-like, required for interaction with CNA1 and CNA2, and calcineurin-dependent dephosphorylation element. 2 positions are modified to phosphoserine: Ser-649 and Ser-653.

As to quaternary structure, heterodimer of SLM1-SLM2. Binds phosphatidylinositol 4,5-bisphosphate, which is required for function. Interacts with the TORC2 subunits AVO2, BIT61 and TOR2. Interacts with the calcineurin catalytic subunits CNA1 and CNA2.

The protein resides in the cell membrane. In terms of biological role, together with SLM1, effector of the TORC2- and calcineurin-signaling pathways. Phosphorylated and activated by TORC2 under favorable growth conditions. Mediates actin polarization via inhibition of calcineurin-dependent transcription. Upon nutrient limitation or environmental stress, gets dephosphorylated by calcineurin, inhibiting interaction with TORC2, thereby antagonizing TORC2 signaling and mediating calcineurin-dependent actin depolarization. Also functions in heat-induced, calcineurin-mediated uracil permease (FUR4) endocytosis. This chain is Phosphatidylinositol 4,5-bisphosphate-binding protein SLM2 (SLM2), found in Saccharomyces cerevisiae (strain ATCC 204508 / S288c) (Baker's yeast).